Here is a 153-residue protein sequence, read N- to C-terminus: Transcriptional repressor NrdR (153 aa).

A zinc finger lies at 3–34 (CPSCFHNGTRVLDSRPVDEGRSIRRRRECESC). The region spanning 49–139 (LIVVKKEGTR…VYRQFKDLNV (91 aa)) is the ATP-cone domain.

The protein belongs to the NrdR family. Zn(2+) is required as a cofactor.

Functionally, negatively regulates transcription of bacterial ribonucleotide reductase nrd genes and operons by binding to NrdR-boxes. In Bacillus mycoides (strain KBAB4) (Bacillus weihenstephanensis), this protein is Transcriptional repressor NrdR.